The following is a 263-amino-acid chain: MKRIGLKVAYDGTDFAGYQIQPNERTVQGELESVLKNIHKGMSIRVTASGRTDTGVHARGQIVHFDTSLSFPVDRWPIALNSQLPADICVLEAADVPADFHARYSAKTKEYRYRVLTSAQADVFRRNYTYHVRYPLDVEAMQRAAVQLLGTHDFSSFCAAKAEVEDKVRTIEDVALWREGDELIFSIRGNGFLYNMVRIIVGTLLEIGAGKRSAEEVAKILAARSREAAGKTAPGHGLISGRSNMTNGKLENNKTTNPCVTKY.

Residue aspartate 53 is the Nucleophile of the active site. Tyrosine 111 contacts substrate. The disordered stretch occupies residues 232-263 (TAPGHGLISGRSNMTNGKLENNKTTNPCVTKY). Over residues 241–263 (GRSNMTNGKLENNKTTNPCVTKY) the composition is skewed to polar residues.

This sequence belongs to the tRNA pseudouridine synthase TruA family. In terms of assembly, homodimer.

It catalyses the reaction uridine(38/39/40) in tRNA = pseudouridine(38/39/40) in tRNA. In terms of biological role, formation of pseudouridine at positions 38, 39 and 40 in the anticodon stem and loop of transfer RNAs. This is tRNA pseudouridine synthase A from Halalkalibacterium halodurans (strain ATCC BAA-125 / DSM 18197 / FERM 7344 / JCM 9153 / C-125) (Bacillus halodurans).